Here is a 595-residue protein sequence, read N- to C-terminus: Aspartate--tRNA(Asp/Asn) ligase (595 aa).

Glutamate 177 lines the L-aspartate pocket. The segment at glutamine 201–lysine 204 is aspartate. Residue arginine 223 participates in L-aspartate binding. ATP contacts are provided by residues arginine 223–glutamate 225 and glutamine 232. Position 455 (histidine 455) interacts with L-aspartate. Glutamate 489 is a binding site for ATP. Arginine 496 lines the L-aspartate pocket. ATP is bound at residue glycine 542–arginine 545.

The protein belongs to the class-II aminoacyl-tRNA synthetase family. Type 1 subfamily. As to quaternary structure, homodimer.

The protein resides in the cytoplasm. It catalyses the reaction tRNA(Asx) + L-aspartate + ATP = L-aspartyl-tRNA(Asx) + AMP + diphosphate. Functionally, aspartyl-tRNA synthetase with relaxed tRNA specificity since it is able to aspartylate not only its cognate tRNA(Asp) but also tRNA(Asn). Reaction proceeds in two steps: L-aspartate is first activated by ATP to form Asp-AMP and then transferred to the acceptor end of tRNA(Asp/Asn). This Opitutus terrae (strain DSM 11246 / JCM 15787 / PB90-1) protein is Aspartate--tRNA(Asp/Asn) ligase.